A 321-amino-acid polypeptide reads, in one-letter code: uncharacterized protein (321 aa).

Helical transmembrane passes span 6 to 26 (LFIGALTCLVASMSWGAMFPV), 37 to 57 (FYFSFIRYGVVTIMLVILLLV), 72 to 92 (WIILFGVMAFTIYNVLIFLGQ), 100 to 120 (IMTASIAEALMPMLSIVILWG), 134 to 154 (ILIAFLGASMVITKGNISFFF), 160 to 180 (LFSILFIFIGVLGWVVYTMGG), 196 to 216 (CLFGTAITGIMTAILTAQGYV), 223 to 243 (VIAAIKYDFLFMITLPGIIAL), 255 to 275 (SINGILFINFVPITTLLIMVI), and 277 to 297 (GYNITAFDIVGTLFVIIGLIL). EamA domains follow at residues 18–146 (MSWG…MVIT) and 175–300 (VYTM…LNNI).

This sequence belongs to the EamA transporter family.

The protein localises to the cell membrane. This is an uncharacterized protein from Bacillus subtilis (strain 168).